The sequence spans 897 residues: Alanine--tRNA ligase (897 aa).

Zn(2+) is bound by residues His581, His585, Cys684, and His688.

Belongs to the class-II aminoacyl-tRNA synthetase family. Zn(2+) is required as a cofactor.

The protein localises to the cytoplasm. It carries out the reaction tRNA(Ala) + L-alanine + ATP = L-alanyl-tRNA(Ala) + AMP + diphosphate. Its function is as follows. Catalyzes the attachment of alanine to tRNA(Ala) in a two-step reaction: alanine is first activated by ATP to form Ala-AMP and then transferred to the acceptor end of tRNA(Ala). Also edits incorrectly charged Ser-tRNA(Ala) and Gly-tRNA(Ala) via its editing domain. This is Alanine--tRNA ligase from Mycobacterium sp. (strain JLS).